The chain runs to 111 residues: UPF0060 membrane protein Aave_2845 (111 aa).

4 helical membrane-spanning segments follow: residues 7–27 (FLLY…PWLW), 33–53 (SAWL…LLTL), 63–83 (AAYG…VDGI), and 90–110 (LAGA…PRGA).

The protein belongs to the UPF0060 family.

The protein localises to the cell inner membrane. In Paracidovorax citrulli (strain AAC00-1) (Acidovorax citrulli), this protein is UPF0060 membrane protein Aave_2845.